The sequence spans 609 residues: Aspartate--tRNA(Asp/Asn) ligase (609 aa).

Glutamate 175 serves as a coordination point for L-aspartate. The tract at residues 199 to 202 is aspartate; it reads QQFK. Residues arginine 221 and histidine 468 each coordinate L-aspartate. 221–223 lines the ATP pocket; it reads RDE. Glutamate 502 lines the ATP pocket. An L-aspartate-binding site is contributed by arginine 509. 554 to 557 contacts ATP; it reads GIDR.

This sequence belongs to the class-II aminoacyl-tRNA synthetase family. Type 1 subfamily. In terms of assembly, homodimer.

It is found in the cytoplasm. It carries out the reaction tRNA(Asx) + L-aspartate + ATP = L-aspartyl-tRNA(Asx) + AMP + diphosphate. Functionally, aspartyl-tRNA synthetase with relaxed tRNA specificity since it is able to aspartylate not only its cognate tRNA(Asp) but also tRNA(Asn). Reaction proceeds in two steps: L-aspartate is first activated by ATP to form Asp-AMP and then transferred to the acceptor end of tRNA(Asp/Asn). This is Aspartate--tRNA(Asp/Asn) ligase from Caulobacter sp. (strain K31).